We begin with the raw amino-acid sequence, 408 residues long: uncharacterized protein (408 aa).

This sequence belongs to the protein kinase superfamily. ADCK protein kinase family.

This is an uncharacterized protein from Synechocystis sp. (strain ATCC 27184 / PCC 6803 / Kazusa).